The sequence spans 123 residues: Protein HesB, heterocyst (123 aa).

Belongs to the HesB/IscA family.

Its function is as follows. May be required for efficient nitrogen fixation. This Trichormus variabilis (strain ATCC 29413 / PCC 7937) (Anabaena variabilis) protein is Protein HesB, heterocyst (hesB1).